Here is a 484-residue protein sequence, read N- to C-terminus: BPI fold-containing family B member 1 (484 aa).

An N-terminal signal peptide occupies residues 1-21 (MAGPWTFTLLCGLLAATLIQA). An N-linked (GlcNAc...) asparagine glycan is attached at N48. An intrachain disulfide couples C158 to C201. 2 N-linked (GlcNAc...) asparagine glycosylation sites follow: N264 and N401.

The protein belongs to the BPI/LBP/Plunc superfamily. Plunc family. In terms of tissue distribution, detected in duodenum mucosal crypts of cholera patients, near Paneth cells (at protein level). Detected in trachea, nasal septal epithelium and lung.

Its subcellular location is the secreted. In terms of biological role, may play a role in innate immunity in mouth, nose and lungs. Binds bacterial lipopolysaccharide (LPS) and modulates the cellular responses to LPS. In Homo sapiens (Human), this protein is BPI fold-containing family B member 1 (BPIFB1).